Here is a 176-residue protein sequence, read N- to C-terminus: Cytochrome c oxidase subunit 5b-1, mitochondrial (176 aa).

Residues 1–55 constitute a mitochondrion transit peptide; it reads MWRRIVSSQLKTLAADVVAASPRRSIAATTRPVGFYLAANRSAISASSFVIPRRF. The Zn(2+) site is built by C122, C146, and C149. A disordered region spans residues 157 to 176; sequence VVGPGGPPDGHGDEDDEHHH.

Belongs to the cytochrome c oxidase subunit 5B (TC 3.D.4.11) family.

The protein localises to the mitochondrion inner membrane. This protein is one of the nuclear-coded polypeptide chains of cytochrome c oxidase, the terminal oxidase in mitochondrial electron transport. The protein is Cytochrome c oxidase subunit 5b-1, mitochondrial (COX5B-1) of Arabidopsis thaliana (Mouse-ear cress).